The primary structure comprises 542 residues: Protein XP55 (542 aa).

Residues 1–33 form the signal peptide; the sequence is MTARRTRWTRRTDRSLPIRSAAAAVAFAAGATA. Cysteine 34 is lipidated: N-palmitoyl cysteine. Cysteine 34 carries S-diacylglycerol cysteine lipidation. The interval 519–542 is disordered; that stretch reads LEGRTNTASPAGPGGTSRTGGRKK.

Belongs to the bacterial solute-binding protein 5 family.

It localises to the cell membrane. In terms of biological role, required for transport of an unidentified substrate. This chain is Protein XP55 (xp55), found in Streptomyces lividans.